The following is a 320-amino-acid chain: Cytochrome f (320 aa).

An N-terminal signal peptide occupies residues 1–35 (MQNRNTFLGVKEQITRSIFVSIMIYVITRASISNA). Heme-binding residues include Y36, C56, C59, and H60. The helical transmembrane segment at 286-306 (IQGLLFFLASVILAQIFLVLK) threads the bilayer.

Belongs to the cytochrome f family. In terms of assembly, the 4 large subunits of the cytochrome b6-f complex are cytochrome b6, subunit IV (17 kDa polypeptide, petD), cytochrome f and the Rieske protein, while the 4 small subunits are PetG, PetL, PetM and PetN. The complex functions as a dimer. It depends on heme as a cofactor.

Its subcellular location is the plastid. It is found in the chloroplast thylakoid membrane. Its function is as follows. Component of the cytochrome b6-f complex, which mediates electron transfer between photosystem II (PSII) and photosystem I (PSI), cyclic electron flow around PSI, and state transitions. The chain is Cytochrome f from Dioscorea elephantipes (Elephant's foot yam).